The chain runs to 761 residues: Elongation factor G, mitochondrial (761 aa).

Residues 1–42 (MSVQKMMRVPRKMVGGRIPFFTCSKVFSGFSRRSFHESPLAR) constitute a mitochondrion transit peptide. The tr-type G domain occupies 68–349 (NKLRNIGISA…AIVDYLPNPS (282 aa)). Residues 77–84 (AHIDSGKT), 148–152 (DTPGH), and 202–205 (NKMD) each bind GTP.

Belongs to the TRAFAC class translation factor GTPase superfamily. Classic translation factor GTPase family. EF-G/EF-2 subfamily. The precursor is processed in two steps involving mitochondrial intermediate peptidase (MIP) and mitochondrial processing peptidase (MPP).

It is found in the mitochondrion. Its pathway is protein biosynthesis; polypeptide chain elongation. Mitochondrial GTPase that catalyzes the GTP-dependent ribosomal translocation step during translation elongation. During this step, the ribosome changes from the pre-translocational (PRE) to the post-translocational (POST) state as the newly formed A-site-bound peptidyl-tRNA and P-site-bound deacylated tRNA move to the P and E sites, respectively. Catalyzes the coordinated movement of the two tRNA molecules, the mRNA and conformational changes in the ribosome. This chain is Elongation factor G, mitochondrial, found in Saccharomyces cerevisiae (strain YJM789) (Baker's yeast).